Here is a 250-residue protein sequence, read N- to C-terminus: UPF0259 membrane protein bbp_256 (250 aa).

6 helical membrane passes run proline 21–isoleucine 41, phenylalanine 86–threonine 106, phenylalanine 125–leucine 145, tyrosine 146–isoleucine 166, isoleucine 188–serine 208, and phenylalanine 216–tyrosine 236.

This sequence belongs to the UPF0259 family.

It localises to the cell membrane. This Buchnera aphidicola subsp. Baizongia pistaciae (strain Bp) protein is UPF0259 membrane protein bbp_256.